Reading from the N-terminus, the 1059-residue chain is Isoleucine--tRNA ligase (1059 aa).

Positions 59–69 (PFANGLPHYGH) match the 'HIGH' region motif. The short motif at 637–641 (KMSKS) is the 'KMSKS' region element. An ATP-binding site is contributed by K640.

The protein belongs to the class-I aminoacyl-tRNA synthetase family. IleS type 2 subfamily. Monomer. It depends on Zn(2+) as a cofactor.

Its subcellular location is the cytoplasm. The enzyme catalyses tRNA(Ile) + L-isoleucine + ATP = L-isoleucyl-tRNA(Ile) + AMP + diphosphate. Its function is as follows. Catalyzes the attachment of isoleucine to tRNA(Ile). As IleRS can inadvertently accommodate and process structurally similar amino acids such as valine, to avoid such errors it has two additional distinct tRNA(Ile)-dependent editing activities. One activity is designated as 'pretransfer' editing and involves the hydrolysis of activated Val-AMP. The other activity is designated 'posttransfer' editing and involves deacylation of mischarged Val-tRNA(Ile). The chain is Isoleucine--tRNA ligase from Mycobacterium leprae (strain TN).